A 252-amino-acid polypeptide reads, in one-letter code: U2 small nuclear ribonucleoprotein A' (252 aa).

LRR repeat units lie at residues 41–62 (PHDA…PLSP), 63–84 (RIRT…LPNA), and 87–108 (NLKN…EVLG). In terms of domain architecture, LRRCT spans 121–159 (NPVTKKENYRYWVLWLCPQVRFLDYVKVKDAERQKAKEL).

This sequence belongs to the U2 small nuclear ribonucleoprotein A family. Associated with the spliceosome.

It is found in the nucleus. Involved in pre-mRNA splicing. In Neurospora crassa (strain ATCC 24698 / 74-OR23-1A / CBS 708.71 / DSM 1257 / FGSC 987), this protein is U2 small nuclear ribonucleoprotein A' (lea-1).